The following is a 64-amino-acid chain: Conotoxin Pu3.5 (64 aa).

An N-terminal signal peptide occupies residues Leu1–Ala16. Positions Val17–Arg49 are excised as a propeptide. Disulfide bonds link Cys50–Cys63, Cys51–Cys58, and Cys54–Cys62.

This sequence belongs to the conotoxin M superfamily. In terms of tissue distribution, expressed by the venom duct.

It localises to the secreted. This Conus pulicarius (Flea-bitten cone) protein is Conotoxin Pu3.5.